The chain runs to 276 residues: Sulfur carrier protein FdhD (276 aa).

C122 (cysteine persulfide intermediate) is an active-site residue. Residue 259–264 participates in Mo-bis(molybdopterin guanine dinucleotide) binding; sequence FCKPGK.

Belongs to the FdhD family.

It localises to the cytoplasm. Functionally, required for formate dehydrogenase (FDH) activity. Acts as a sulfur carrier protein that transfers sulfur from IscS to the molybdenum cofactor prior to its insertion into FDH. The polypeptide is Sulfur carrier protein FdhD (Photorhabdus laumondii subsp. laumondii (strain DSM 15139 / CIP 105565 / TT01) (Photorhabdus luminescens subsp. laumondii)).